Here is a 503-residue protein sequence, read N- to C-terminus: ATP synthase subunit alpha (503 aa).

169 to 176 is a binding site for ATP; it reads GDRKTGKT.

Belongs to the ATPase alpha/beta chains family. As to quaternary structure, F-type ATPases have 2 components, CF(1) - the catalytic core - and CF(0) - the membrane proton channel. CF(1) has five subunits: alpha(3), beta(3), gamma(1), delta(1), epsilon(1). CF(0) has three main subunits: a(1), b(2) and c(9-12). The alpha and beta chains form an alternating ring which encloses part of the gamma chain. CF(1) is attached to CF(0) by a central stalk formed by the gamma and epsilon chains, while a peripheral stalk is formed by the delta and b chains.

It localises to the cell membrane. It carries out the reaction ATP + H2O + 4 H(+)(in) = ADP + phosphate + 5 H(+)(out). In terms of biological role, produces ATP from ADP in the presence of a proton gradient across the membrane. The alpha chain is a regulatory subunit. The protein is ATP synthase subunit alpha of Lactobacillus delbrueckii subsp. bulgaricus (strain ATCC 11842 / DSM 20081 / BCRC 10696 / JCM 1002 / NBRC 13953 / NCIMB 11778 / NCTC 12712 / WDCM 00102 / Lb 14).